The sequence spans 39 residues: U1-nemetoxin-Csp1c (39 aa).

Cystine bridges form between Cys1–Cys15, Cys8–Cys19, Cys14–Cys36, and Cys25–Cys32.

In terms of tissue distribution, expressed by the venom gland.

It is found in the secreted. Causes paralysis to insect larvae (H.virescens). This toxin is active only on insects. In Calisoga sp. (Spider), this protein is U1-nemetoxin-Csp1c.